The primary structure comprises 201 residues: Protein OPI10 homolog (201 aa).

It belongs to the OPI10 family.

In Anopheles gambiae (African malaria mosquito), this protein is Protein OPI10 homolog.